The primary structure comprises 235 residues: Phosphoribosylaminoimidazole-succinocarboxamide synthase (235 aa).

The protein belongs to the SAICAR synthetase family.

The enzyme catalyses 5-amino-1-(5-phospho-D-ribosyl)imidazole-4-carboxylate + L-aspartate + ATP = (2S)-2-[5-amino-1-(5-phospho-beta-D-ribosyl)imidazole-4-carboxamido]succinate + ADP + phosphate + 2 H(+). The protein operates within purine metabolism; IMP biosynthesis via de novo pathway; 5-amino-1-(5-phospho-D-ribosyl)imidazole-4-carboxamide from 5-amino-1-(5-phospho-D-ribosyl)imidazole-4-carboxylate: step 1/2. This chain is Phosphoribosylaminoimidazole-succinocarboxamide synthase, found in Exiguobacterium sibiricum (strain DSM 17290 / CCUG 55495 / CIP 109462 / JCM 13490 / 255-15).